The chain runs to 445 residues: Phosphoglucosamine mutase (445 aa).

S102 (phosphoserine intermediate) is an active-site residue. 4 residues coordinate Mg(2+): S102, D241, D243, and D245. Residue S102 is modified to Phosphoserine.

Belongs to the phosphohexose mutase family. Requires Mg(2+) as cofactor. Post-translationally, activated by phosphorylation.

It catalyses the reaction alpha-D-glucosamine 1-phosphate = D-glucosamine 6-phosphate. Catalyzes the conversion of glucosamine-6-phosphate to glucosamine-1-phosphate. In Enterobacter sp. (strain 638), this protein is Phosphoglucosamine mutase.